The primary structure comprises 968 residues: RNA polymerase-associated protein RapA (968 aa).

In terms of domain architecture, Helicase ATP-binding spans 164-334 (DVGRRHAPRV…FARLRLLDPN (171 aa)). Residue 177-184 (DEVGLGKT) participates in ATP binding. Residues 280-283 (DEAH) carry the DEAH box motif. One can recognise a Helicase C-terminal domain in the interval 490-644 (RVEWLMGYLT…TCPTGRTVYD (155 aa)).

It belongs to the SNF2/RAD54 helicase family. RapA subfamily. As to quaternary structure, interacts with the RNAP. Has a higher affinity for the core RNAP than for the holoenzyme. Its ATPase activity is stimulated by binding to RNAP.

Its function is as follows. Transcription regulator that activates transcription by stimulating RNA polymerase (RNAP) recycling in case of stress conditions such as supercoiled DNA or high salt concentrations. Probably acts by releasing the RNAP, when it is trapped or immobilized on tightly supercoiled DNA. Does not activate transcription on linear DNA. Probably not involved in DNA repair. The protein is RNA polymerase-associated protein RapA of Klebsiella pneumoniae (strain 342).